Consider the following 151-residue polypeptide: Deoxyuridine 5'-triphosphate nucleotidohydrolase (151 aa).

Substrate contacts are provided by residues 70-72 (RSG), asparagine 83, 87-89 (LID), and methionine 97.

This sequence belongs to the dUTPase family. It depends on Mg(2+) as a cofactor.

It catalyses the reaction dUTP + H2O = dUMP + diphosphate + H(+). It functions in the pathway pyrimidine metabolism; dUMP biosynthesis; dUMP from dCTP (dUTP route): step 2/2. In terms of biological role, this enzyme is involved in nucleotide metabolism: it produces dUMP, the immediate precursor of thymidine nucleotides and it decreases the intracellular concentration of dUTP so that uracil cannot be incorporated into DNA. In Pseudomonas putida (strain W619), this protein is Deoxyuridine 5'-triphosphate nucleotidohydrolase.